An 829-amino-acid polypeptide reads, in one-letter code: Periplasmic nitrate reductase (829 aa).

The tat-type signal signal peptide spans 1–30; it reads MKMTRRAFVKANAAASAAAVAGITLPASAA. In terms of domain architecture, 4Fe-4S Mo/W bis-MGD-type spans 41–97; the sequence is ITWDKAPCRFCGTGCSVLVGTQNGKVVATQGDPEAPVNKGLNCIKGYFLSKIMYGQD. Residues C48, C51, C55, and C83 each contribute to the [4Fe-4S] cluster site. Mo-bis(molybdopterin guanine dinucleotide) is bound by residues K85, Q152, N177, C181, 214-221, 245-249, 264-266, M374, Q378, N484, 510-511, K533, D560, and 718-727; these read WGSNMAEM, STYYH, QSD, SD, and TGRVLEHWHT. F794 contacts substrate. The Mo-bis(molybdopterin guanine dinucleotide) site is built by N802 and K819.

This sequence belongs to the prokaryotic molybdopterin-containing oxidoreductase family. NasA/NapA/NarB subfamily. In terms of assembly, component of the periplasmic nitrate reductase NapAB complex composed of NapA and NapB. [4Fe-4S] cluster is required as a cofactor. It depends on Mo-bis(molybdopterin guanine dinucleotide) as a cofactor. Post-translationally, predicted to be exported by the Tat system. The position of the signal peptide cleavage has not been experimentally proven.

It is found in the periplasm. The catalysed reaction is 2 Fe(II)-[cytochrome] + nitrate + 2 H(+) = 2 Fe(III)-[cytochrome] + nitrite + H2O. In terms of biological role, catalytic subunit of the periplasmic nitrate reductase complex NapAB. Receives electrons from NapB and catalyzes the reduction of nitrate to nitrite. This Vibrio parahaemolyticus serotype O3:K6 (strain RIMD 2210633) protein is Periplasmic nitrate reductase.